Here is a 602-residue protein sequence, read N- to C-terminus: Threonine--tRNA ligase (602 aa).

The catalytic stretch occupies residues 208–499; that stretch reads DHRKLGTELK…LTEHCAGEFP (292 aa). C300, H351, and H476 together coordinate Zn(2+).

The protein belongs to the class-II aminoacyl-tRNA synthetase family. As to quaternary structure, homodimer. It depends on Zn(2+) as a cofactor.

It localises to the cytoplasm. It catalyses the reaction tRNA(Thr) + L-threonine + ATP = L-threonyl-tRNA(Thr) + AMP + diphosphate + H(+). Its function is as follows. Catalyzes the attachment of threonine to tRNA(Thr) in a two-step reaction: L-threonine is first activated by ATP to form Thr-AMP and then transferred to the acceptor end of tRNA(Thr). Also edits incorrectly charged L-seryl-tRNA(Thr). The polypeptide is Threonine--tRNA ligase (Campylobacter jejuni subsp. jejuni serotype O:6 (strain 81116 / NCTC 11828)).